A 489-amino-acid polypeptide reads, in one-letter code: Metalloreductase STEAP2 (489 aa).

Residues 37–40, 59–60, 92–99, N117, and A150 contribute to the NADP(+) site; these read SGDF, SR, and IHREHYTS. Positions 151 and 159 each coordinate FAD. A helical transmembrane segment spans residues 207–227; the sequence is LFTLWRGPVVVAISLATFFFL. Residue Y228 participates in Fe(3+) binding. A helical transmembrane segment spans residues 258-278; sequence LPIVAITLLSLVYLAGLLAAA. Residues 258–406 enclose the Ferric oxidoreductase domain; it reads LPIVAITLLS…LGYVALLITT (149 aa). The FAD site is built by Q280 and R301. The next 4 helical transmembrane spans lie at 304–324, 358–378, 392–412, and 431–451; these read LGLLSFFFAVVHVAYSLCLPM, MYISFGIMSLGLLSLLAVTSI, FIQSTLGYVALLITTFHVLIY, and FVLALVLPSIVILGKMILLLP. Residue H315 participates in heme b binding. Y318 contributes to the Fe(3+) binding site. Residues S377 and Q394 each contribute to the FAD site. H408 is a heme b binding site. S482 carries the post-translational modification Phosphoserine.

Belongs to the STEAP family. FAD is required as a cofactor. Heme b serves as cofactor.

It localises to the cell membrane. Its subcellular location is the endosome membrane. The enzyme catalyses 2 Fe(2+) + NADP(+) + H(+) = 2 Fe(3+) + NADPH. The catalysed reaction is 2 Cu(+) + NADP(+) + H(+) = 2 Cu(2+) + NADPH. Integral membrane protein that functions as a NADPH-dependent ferric-chelate reductase, using NADPH from one side of the membrane to reduce a Fe(3+) chelate that is bound on the other side of the membrane. Mediates sequential transmembrane electron transfer from NADPH to FAD and onto heme, and finally to the Fe(3+) chelate. Can also reduce Cu(2+) to Cu(1+). The chain is Metalloreductase STEAP2 (Steap2) from Mus musculus (Mouse).